A 178-amino-acid chain; its full sequence is Alkyl hydroperoxide reductase AhpD (178 aa).

Cysteine 131 serves as the catalytic Proton donor. Cysteine 131 and cysteine 134 are oxidised to a cystine. Residue cysteine 134 is the Cysteine sulfenic acid (-SOH) intermediate of the active site.

The protein belongs to the AhpD family. In terms of assembly, homotrimer.

The catalysed reaction is N(6)-[(R)-dihydrolipoyl]-L-lysyl-[lipoyl-carrier protein] + a hydroperoxide = N(6)-[(R)-lipoyl]-L-lysyl-[lipoyl-carrier protein] + an alcohol + H2O. In terms of biological role, antioxidant protein with alkyl hydroperoxidase activity. Required for the reduction of the AhpC active site cysteine residues and for the regeneration of the AhpC enzyme activity. The polypeptide is Alkyl hydroperoxide reductase AhpD (Streptomyces coelicolor (strain ATCC BAA-471 / A3(2) / M145)).